Consider the following 611-residue polypeptide: Protein PES4 (611 aa).

A disordered region spans residues 37–81; that stretch reads FNPVVTPIRPDDYHEKTSRSSSSSHSDSPEFLRINNNKSGHKNGK. Residues 45-54 show a composition bias toward basic and acidic residues; sequence RPDDYHEKTS. 4 consecutive RRM domains span residues 91 to 169, 179 to 247, 303 to 379, and 393 to 471; these read VPLF…PSLR, TNVF…GKKI, NSIF…RAQD, and STLF…WERQ.

It localises to the nucleus. The polypeptide is Protein PES4 (PES4) (Saccharomyces cerevisiae (strain ATCC 204508 / S288c) (Baker's yeast)).